A 388-amino-acid polypeptide reads, in one-letter code: Succinate--CoA ligase [ADP-forming] subunit beta (388 aa).

Residues K9–R243 form the ATP-grasp domain. Residues K45, G52–G54, E98, V101, and E106 each bind ATP. 2 residues coordinate Mg(2+): N198 and D212. Residues N263 and G320–M322 each bind substrate.

Belongs to the succinate/malate CoA ligase beta subunit family. As to quaternary structure, heterotetramer of two alpha and two beta subunits. Requires Mg(2+) as cofactor.

It carries out the reaction succinate + ATP + CoA = succinyl-CoA + ADP + phosphate. The enzyme catalyses GTP + succinate + CoA = succinyl-CoA + GDP + phosphate. It participates in carbohydrate metabolism; tricarboxylic acid cycle; succinate from succinyl-CoA (ligase route): step 1/1. Succinyl-CoA synthetase functions in the citric acid cycle (TCA), coupling the hydrolysis of succinyl-CoA to the synthesis of either ATP or GTP and thus represents the only step of substrate-level phosphorylation in the TCA. The beta subunit provides nucleotide specificity of the enzyme and binds the substrate succinate, while the binding sites for coenzyme A and phosphate are found in the alpha subunit. The sequence is that of Succinate--CoA ligase [ADP-forming] subunit beta from Syntrophotalea carbinolica (strain DSM 2380 / NBRC 103641 / GraBd1) (Pelobacter carbinolicus).